The following is a 473-amino-acid chain: MSNIYIQEPPTNGKVLLKTTAGDIDIELWSKEAPKACRNFIQLCLEAYYDNTIFHRVVPGFIVQGGDPTGTGSGGESIYGAPFKDEFHSRLRFNRRGLVAMANAGSHDNGSQFFFTLGRADELNNKHTIFGKVTGDTVYNMLRLSEVDIDDEERPHNPHKIKSCEVLFNPFDDIIPREIKRPKKEKPEEEVKKLKPKGTKNFSLLSFGEEAEEEEEEVNRVSQSMKGKSKSSHDLLKDDPHLSSVPVVESEKGDAAGDLDDDGEDESAEYDEYVDGDEKNLMRERIAKKLKKDTSANVKSAGEGEVEKKSVSRSEELRKEARQLKRELLAAKQKKVENEAKQAEKRSEEEEATPDGAVAEYRREKQKYEALRKQQSKKGTSREDQTLALLNQFKSKLTQAIAETPENDIPETEVEDDEGWMSHVLQFEDKSRKVKDASMQDSDTFEIYDPRNPVNKRRREESKKLMREKKERR.

S2 carries the N-acetylserine modification. The 156-residue stretch at 11–166 (TNGKVLLKTT…NPHKIKSCEV (156 aa)) folds into the PPIase cyclophilin-type domain. Residues 177–193 (REIKRPKKEKPEEEVKK) show a composition bias toward basic and acidic residues. Disordered regions lie at residues 177–386 (REIK…EDQT) and 399–473 (QAIA…KERR). Residues 206 to 230 (SFGEEAEEEEEEVNRVSQSMKGKSK) adopt a coiled-coil conformation. Positions 231-241 (SSHDLLKDDPH) are enriched in basic and acidic residues. Positions 257-275 (GDLDDDGEDESAEYDEYVD) are enriched in acidic residues. Composition is skewed to basic and acidic residues over residues 276–287 (GDEKNLMRERIA), 305–348 (EVEK…KRSE), and 360–372 (EYRREKQKYEALR). Positions 307-378 (EKKSVSRSEE…EALRKQQSKK (72 aa)) form a coiled coil. Phosphoserine is present on S347. The span at 405–419 (PENDIPETEVEDDEG) shows a compositional bias: acidic residues. 2 stretches are compositionally biased toward basic and acidic residues: residues 426–438 (QFEDKSRKVKDAS) and 458–473 (RREESKKLMREKKERR).

The protein belongs to the cyclophilin-type PPIase family. As to quaternary structure, part of the activated spliceosome B/catalytic step 1 spliceosome, one of the forms of the spliceosome which has a well-formed active site but still cannot catalyze the branching reaction and is composed at least of 52 proteins, the U2, U5 and U6 snRNAs and the pre-mRNA. Recruited during early steps of activated spliceosome B maturation, it is probably one of the first proteins released from this complex as he matures to the spliceosome C complex. Component of the minor spliceosome, which splices U12-type introns.

It is found in the nucleus. In terms of biological role, as part of the spliceosome, plays a role in pre-mRNA splicing. Probable inactive PPIase with no peptidyl-prolyl cis-trans isomerase activity. As a component of the minor spliceosome, involved in the splicing of U12-type introns in pre-mRNAs. This chain is Spliceosome-associated protein CWC27 homolog, found in Macaca fascicularis (Crab-eating macaque).